A 230-amino-acid polypeptide reads, in one-letter code: 7-cyano-7-deazaguanine synthase (230 aa).

L14 to L24 provides a ligand contact to ATP. Zn(2+) contacts are provided by C194, C204, C207, and C210.

The protein belongs to the QueC family. Zn(2+) serves as cofactor.

The catalysed reaction is 7-carboxy-7-deazaguanine + NH4(+) + ATP = 7-cyano-7-deazaguanine + ADP + phosphate + H2O + H(+). Its pathway is purine metabolism; 7-cyano-7-deazaguanine biosynthesis. Catalyzes the ATP-dependent conversion of 7-carboxy-7-deazaguanine (CDG) to 7-cyano-7-deazaguanine (preQ(0)). The protein is 7-cyano-7-deazaguanine synthase of Ruthia magnifica subsp. Calyptogena magnifica.